Reading from the N-terminus, the 141-residue chain is 2S seed storage albumin protein (141 aa).

The first 22 residues, 1–22 (MARLTSIIALFAVALLVADAYA), serve as a signal peptide directing secretion. A propeptide spanning residues 23–35 (YRTTITTVEVEEN) is cleaved from the precursor. 4 cysteine pairs are disulfide-bonded: cysteine 43-cysteine 97, cysteine 55-cysteine 86, cysteine 87-cysteine 132, and cysteine 99-cysteine 139.

Belongs to the 2S seed storage albumins family. As to quaternary structure, the mature protein consists of a small and a large chain linked by 2 disulfide bonds.

The protein localises to the vacuole. The protein resides in the aleurone grain. Functionally, this is a 2S seed storage protein. This Cucurbita maxima (Pumpkin) protein is 2S seed storage albumin protein.